The primary structure comprises 804 residues: Zinc finger protein YGR067C (804 aa).

C2H2-type zinc fingers lie at residues 8-30 (YICS…ERSH) and 36-59 (FQCQ…RTVH). Residues 782-796 (QEFSASSTDNKQSKN) are compositionally biased toward polar residues. Residues 782–804 (QEFSASSTDNKQSKNIEIFSQIK) form a disordered region.

The protein resides in the nucleus. The polypeptide is Zinc finger protein YGR067C (Saccharomyces cerevisiae (strain ATCC 204508 / S288c) (Baker's yeast)).